Here is a 65-residue protein sequence, read N- to C-terminus: Large ribosomal subunit protein bL35 (65 aa).

This sequence belongs to the bacterial ribosomal protein bL35 family.

This Laribacter hongkongensis (strain HLHK9) protein is Large ribosomal subunit protein bL35.